Consider the following 174-residue polypeptide: Large ribosomal subunit protein uL10 (174 aa).

This sequence belongs to the universal ribosomal protein uL10 family. As to quaternary structure, part of the ribosomal stalk of the 50S ribosomal subunit. The N-terminus interacts with L11 and the large rRNA to form the base of the stalk. The C-terminus forms an elongated spine to which L12 dimers bind in a sequential fashion forming a multimeric L10(L12)X complex.

Its function is as follows. Forms part of the ribosomal stalk, playing a central role in the interaction of the ribosome with GTP-bound translation factors. The sequence is that of Large ribosomal subunit protein uL10 from Geobacter sulfurreducens (strain ATCC 51573 / DSM 12127 / PCA).